The following is a 414-amino-acid chain: Putative dipeptidase ARB_02715 (414 aa).

The N-terminal stretch at 1–20 (MAALFVSLLALTSLVPVQGA) is a signal peptide. The Zn(2+) site is built by histidine 45, aspartate 47, and glutamate 157. Cysteine 96 and cysteine 186 are oxidised to a cystine. Histidine 184 contacts substrate. 2 residues coordinate Zn(2+): histidine 228 and histidine 249. Residues arginine 260 and aspartate 320 each coordinate substrate. N-linked (GlcNAc...) asparagine glycosylation occurs at asparagine 392.

Belongs to the metallo-dependent hydrolases superfamily. Peptidase M19 family. Zn(2+) is required as a cofactor.

It carries out the reaction an L-aminoacyl-L-amino acid + H2O = 2 an L-alpha-amino acid. Hydrolyzes a wide range of dipeptides. The protein is Putative dipeptidase ARB_02715 of Arthroderma benhamiae (strain ATCC MYA-4681 / CBS 112371) (Trichophyton mentagrophytes).